A 1093-amino-acid chain; its full sequence is Semaphorin 5c (1093 aa).

An N-terminal signal peptide occupies residues 1 to 34 (MNMLILKLPKMFSQLWLLLILSLLTLEGPQPSTG). N48 carries an N-linked (GlcNAc...) asparagine glycan. The region spanning 50–495 (SRYISYQDLM…TDLALTRIPA (446 aa)) is the Sema domain. Disulfide bonds link C118–C128 and C146–C155. N-linked (GlcNAc...) asparagine glycosylation is found at N162, N182, N285, and N295. Disulfide bonds link C271/C376 and C296/C338. A glycan (N-linked (GlcNAc...) asparagine) is linked at N341. The PSI domain occupies 497–546 (HCSRHVSQSSCLNSMDPYCGWNELVERCMPQPQDSSVLQHWHQAPQITCP). TSP type-1 domains are found at residues 553 to 605 (DGGW…TNCT), 607 to 663 (HGGW…PPCP), and 671 to 726 (DGGW…QSCQ). An N-linked (GlcNAc...) asparagine glycan is attached at N603. 6 disulfide bridges follow: C619/C656, C623/C662, C634/C646, C683/C720, C687/C725, and C698/C710. An N-linked (GlcNAc...) asparagine glycan is attached at N745. 3 TSP type-1 domains span residues 794–834 (DSAD…HACP), 850–901 (HGEW…VPCE), and 904–953 (LGWS…NECE). 3 disulfides stabilise this stretch: C862–C895, C866–C900, and C877–C885. A helical membrane pass occupies residues 960–980 (TATLPIVIFVGLLFTVACCLA). 2 N-linked (GlcNAc...) asparagine glycosylation sites follow: N998 and N1046. Positions 1018–1056 (PTKDYYDQRPKRQSSFRMPAKTSNLGNGNGTLNRNNMHQ) are disordered. A compositionally biased stretch (low complexity) spans 1041–1053 (NLGNGNGTLNRNN).

This sequence belongs to the semaphorin family. In terms of tissue distribution, in egg chambers, high levels of expression in the follicle cells, with little to no expression in the germ cells (at protein level). In stage 3 to 7 egg chambers, planar polarized at the basal epithelial surface (at protein level).

The protein localises to the apical cell membrane. It localises to the lateral cell membrane. It is found in the endosome. Regulates the motility of migrating epithelial cells by providing guidance cues within the migratory environment and may also play a role in development of the olfactory system. May act as a positive axonal guidance cue. Function in neurons is essential for adult survival and is important for climbing behavior. Promotes collective migration of follicular epithelial cells in egg chambers, likely by acting at the leading edge of the basal epithelium cells to provide guidance cues across the cell boundary to the trailing edge of the cell ahead. The transmembrane receptor PlexA on the trailing edge of the cell ahead, appears to transduce this signal to suppress the formation of protrusions. Involved in olfactory avoidance behavior. The chain is Semaphorin 5c from Drosophila melanogaster (Fruit fly).